The following is a 482-amino-acid chain: tRNA sulfurtransferase (482 aa).

In terms of domain architecture, THUMP spans 61 to 165; that stretch reads LAIRDALTRI…DDRLLLIKGR (105 aa). Residues 183–184, Lys-265, Gly-287, and Gln-296 each bind ATP; that span reads LI. Cysteines 344 and 456 form a disulfide. A Rhodanese domain is found at 404–482; that stretch reads FGPNDVILDI…GFANVKVYRP (79 aa). Cys-456 acts as the Cysteine persulfide intermediate in catalysis.

It belongs to the ThiI family.

It localises to the cytoplasm. It catalyses the reaction [ThiI sulfur-carrier protein]-S-sulfanyl-L-cysteine + a uridine in tRNA + 2 reduced [2Fe-2S]-[ferredoxin] + ATP + H(+) = [ThiI sulfur-carrier protein]-L-cysteine + a 4-thiouridine in tRNA + 2 oxidized [2Fe-2S]-[ferredoxin] + AMP + diphosphate. It carries out the reaction [ThiS sulfur-carrier protein]-C-terminal Gly-Gly-AMP + S-sulfanyl-L-cysteinyl-[cysteine desulfurase] + AH2 = [ThiS sulfur-carrier protein]-C-terminal-Gly-aminoethanethioate + L-cysteinyl-[cysteine desulfurase] + A + AMP + 2 H(+). Its pathway is cofactor biosynthesis; thiamine diphosphate biosynthesis. In terms of biological role, catalyzes the ATP-dependent transfer of a sulfur to tRNA to produce 4-thiouridine in position 8 of tRNAs, which functions as a near-UV photosensor. Also catalyzes the transfer of sulfur to the sulfur carrier protein ThiS, forming ThiS-thiocarboxylate. This is a step in the synthesis of thiazole, in the thiamine biosynthesis pathway. The sulfur is donated as persulfide by IscS. This chain is tRNA sulfurtransferase, found in Salmonella choleraesuis (strain SC-B67).